Consider the following 153-residue polypeptide: Prostaglandin E synthase (153 aa).

Topologically, residues 1 to 13 (MPSPGLVMESGQV) are lumenal. Residues 14–42 (LPAFLLCSTLLVIKMYAVAVITGQMRLRK) form a helical membrane-spanning segment. Arg39 is a binding site for glutathione. Residues 43–61 (KAFANPEDALKRGGLQYYR) are Cytoplasmic-facing. A helical membrane pass occupies residues 62–91 (SDPDVERCLRAHRNDMETIYPFLFLGFVYS). Residue 74–78 (RNDME) coordinates glutathione. The Lumenal segment spans residues 92-96 (FLGPN). The helical transmembrane segment at 97–120 (PLIAWIHFLVVLTGRVVHTVAYLG) threads the bilayer. His114 and Tyr118 together coordinate glutathione. At 121–124 (KLNP) the chain is on the cytoplasmic side. A helical transmembrane segment spans residues 125-153 (RLRSGAYVLAQFSCFSMALQILWEVAHHL). 127-131 (RSGAY) is a binding site for glutathione.

It belongs to the MAPEG family. As to quaternary structure, homotrimer. Requires glutathione as cofactor.

Its subcellular location is the membrane. The protein localises to the cytoplasm. The protein resides in the perinuclear region. The enzyme catalyses prostaglandin H2 = prostaglandin E2. The catalysed reaction is 2-glyceryl-prostaglandin H2 = 2-glyceryl-prostaglandin E2. It carries out the reaction prostaglandin G2 = (15S)-15-hydroperoxy-prostaglandin E2. It catalyses the reaction 1-chloro-2,4-dinitrobenzene + glutathione = 2,4-dinitrophenyl-S-glutathione + chloride + H(+). The enzyme catalyses (5S)-hydroperoxy-(6E,8Z,11Z,14Z)-eicosatetraenoate + 2 glutathione = (5S)-hydroxy-(6E,8Z,11Z,14Z)-eicosatetraenoate + glutathione disulfide + H2O. Its pathway is lipid metabolism; prostaglandin biosynthesis. Its activity is regulated as follows. Activity is increased markedly in macrophages and osteoblasts following pro-inflammatory stimuli. Functionally, terminal enzyme of the cyclooxygenase (COX)-2-mediated prostaglandin E2 (PGE2) biosynthetic pathway. Catalyzes the glutathione-dependent oxidoreduction of prostaglandin endoperoxide H2 (PGH2) to prostaglandin E2 (PGE2) in response to inflammatory stimuli. Plays a key role in inflammation response, fever and pain. Also catalyzes the oxidoreduction of endocannabinoids into prostaglandin glycerol esters and PGG2 into 15-hydroperoxy-PGE2. In addition, displays low glutathione transferase and glutathione-dependent peroxidase activities, toward 1-chloro-2,4-dinitrobenzene and 5-hydroperoxyicosatetraenoic acid (5-HPETE), respectively. The polypeptide is Prostaglandin E synthase (Ptges) (Mus musculus (Mouse)).